The sequence spans 468 residues: Neurexin-1-beta (468 aa).

Residues 1–46 (MYQRMLRCGAELGSPGGGSSGGAGGRLALLWIVPLTLSGLLGVAWG) form the signal peptide. Over 47–391 (ASSLGAHHIH…AEVIRESSST (345 aa)) the chain is Extracellular. The Laminin G-like domain occupies 87–285 (YIFSKGGGQI…DANIAIVGNV (199 aa)). The Ca(2+) site is built by aspartate 137 and valine 154. The N-linked (GlcNAc...) asparagine glycan is linked to asparagine 184. The interval 201–230 (GNNDNERLAIARQRIPYRLGRVVDEWLLDK) is essential for interaction with CBLN1; modulates interaction affinity with NLGN1, NLGN2 and NLGN3; prevents interaction with DAG1/alpha-dystroglycan; modulates interaction with alpha-latrotoxin. Ca(2+) is bound by residues isoleucine 236 and asparagine 238. Serine 346 is a glycosylation site (O-linked (Xyl...) (heparan sulfate) serine). The disordered stretch occupies residues 350–381 (PSDDEDIDPCEPSSGGLANPTRVGGREPYPGS). A helical transmembrane segment spans residues 392–414 (TGMVVGIVAAAALCILILLYAMY). Topologically, residues 415-468 (KYRNRDEGSYHVDESRNYISNSAQSNGAVVKEKQPSSAKSANKNKKNKDKEYYV) are cytoplasmic. The interval 435–468 (NSAQSNGAVVKEKQPSSAKSANKNKKNKDKEYYV) is disordered. A phosphoserine mark is found at serine 450, serine 451, and serine 454.

This sequence belongs to the neurexin family. As to quaternary structure, the cytoplasmic C-terminal region binds to CASK. Binds NLGN1, NLGN2 and NLGN3, DAG1 (alpha-dystroglycan) and alpha-latrotoxin. Binding to neuroligins is calcium-dependent, and the binding preference ranks as follow: NLGN1 &gt; NLGN4 &gt;&gt; NLGN3 &gt; NLGN2. Interacts with CBLN2 and more weakly with CBLN4. Interacts with CBLN1; interaction is CBLN1 hexamer form-dependent; CBLN1-binding is calcium-independent; isoform 1b does not interact with CBLN1. Interacts with CLSTN3. Post-translationally, N-glycosylated. In terms of processing, O-glycosylated; contains heparan sulfate. Heparan sulfate attachment is required for synapse development by mediating interactions with neuroligins. In terms of tissue distribution, brain.

It localises to the presynaptic cell membrane. Its function is as follows. Neuronal cell surface protein involved in cell recognition and cell adhesion by forming intracellular junctions through binding to neuroligins. Plays a role in formation of synaptic junctions. Functions as part of a trans-synaptic complex by binding to cerebellins and postsynaptic GRID1. This interaction helps regulate the activity of NMDA and AMPA receptors at hippocampal synapses without affecting synapse formation. NRXN1B-CBLN2-GRID1 complex transduce presynaptic signals into postsynaptic NMDAR response. This is Neurexin-1-beta from Rattus norvegicus (Rat).